We begin with the raw amino-acid sequence, 234 residues long: Ribonuclease HII (234 aa).

The RNase H type-2 domain occupies 16 to 207 (ALVAGVDEAG…VRRMLTPKAI (192 aa)). The a divalent metal cation site is built by Asp-22, Glu-23, and Asp-115.

This sequence belongs to the RNase HII family. It depends on Mn(2+) as a cofactor. Requires Mg(2+) as cofactor.

Its subcellular location is the cytoplasm. The enzyme catalyses Endonucleolytic cleavage to 5'-phosphomonoester.. Its function is as follows. Endonuclease that specifically degrades the RNA of RNA-DNA hybrids. The sequence is that of Ribonuclease HII from Xylella fastidiosa (strain M12).